A 437-amino-acid chain; its full sequence is Major royal jelly protein 6 (437 aa).

A signal peptide spans 1-20; sequence MTNWLLLIVCLSIACQDVTS. N78, N164, N181, N201, and N324 each carry an N-linked (GlcNAc...) asparagine glycan.

This sequence belongs to the major royal jelly protein family. As to expression, found in and secreted from the hypopharyngeal glands of the worker honey bee (at protein level); expression peaks at 20 days post eclosion. Expressed in the spermatheca of adult queen bees (at protein level); Expression levels are higher in mated queens than in virgin queens. Expressed at low level in the brains of adult worker bees. Protein abundance does not seem to correlate with transcript abundance.

The protein localises to the secreted. Component of royal jelly, a substance produced in the hypopharyngeal gland containing proteins, free amino acids, fatty acids, sugars and other nutrients, which is fed to developing larvae by worker nurse bees. All larvae are fed some royal jelly (also known as worker jelly) early in their development but it forms the principal source of nutrition for larvae destined to become queen bees. Produced in the spermatheca of adult queen bees, along with other major royal jelly proteins, where it may act as a nutrient supply for sperm stored by mated queens, or be involved in energy metabolism. This is Major royal jelly protein 6 from Apis mellifera (Honeybee).